We begin with the raw amino-acid sequence, 263 residues long: MAVNVYSTSVTSDNLSRHDMLAWINESLQLTLTKIEQLCSGAAYCQFMDMLFPGSVALKKVKFQAKLEHEYIQNFKVLQAGFKRMGVDKIIPVDKLVKGKFQDNFEFVQWFKKFFDANYDGKEYDPVAARQGQETVAPNLVAPVMNKPKKPLGTGSAGPQRPIVAQRTPATPKGGTGMVKKAAGDDESAGLIEQINVLKLTVEDLEKERDFYFGKLRNIELICQENEGENDPVLQRIVEILYATDEGFVIPDEGAPQEEQEEY.

In terms of domain architecture, Calponin-homology (CH) spans 14–116 (NLSRHDMLAW…FVQWFKKFFD (103 aa)). The disordered stretch occupies residues 150–182 (KPLGTGSAGPQRPIVAQRTPATPKGGTGMVKKA). The region spanning 180-250 (KKAAGDDESA…LYATDEGFVI (71 aa)) is the EB1 C-terminal domain.

Belongs to the MAPRE family.

It is found in the cytoplasm. It localises to the cytoskeleton. The protein resides in the microtubule organizing center. Its subcellular location is the centrosome. The protein localises to the golgi apparatus. It is found in the spindle. It localises to the spindle pole. Functionally, plus-end tracking protein (+TIP) that binds to the plus-end of microtubules and regulates the dynamics of the microtubule cytoskeleton. Promotes cytoplasmic microtubule nucleation and elongation. Involved in mitotic spindle positioning by stabilizing microtubules and promoting dynamic connection between astral microtubules and the cortex during mitotic chromosome segregation. In Coturnix japonica (Japanese quail), this protein is Microtubule-associated protein RP/EB family member 1 (MAPRE1).